The primary structure comprises 98 residues: NADH-ubiquinone oxidoreductase chain 4L (98 aa).

The next 3 helical transmembrane spans lie at 1–21, 29–49, and 61–81; these read MTMV…GLLM, SLLC…VTIL, and IILL…LVMV.

Belongs to the complex I subunit 4L family. As to quaternary structure, core subunit of respiratory chain NADH dehydrogenase (Complex I) which is composed of 45 different subunits.

Its subcellular location is the mitochondrion inner membrane. It carries out the reaction a ubiquinone + NADH + 5 H(+)(in) = a ubiquinol + NAD(+) + 4 H(+)(out). Core subunit of the mitochondrial membrane respiratory chain NADH dehydrogenase (Complex I) which catalyzes electron transfer from NADH through the respiratory chain, using ubiquinone as an electron acceptor. Part of the enzyme membrane arm which is embedded in the lipid bilayer and involved in proton translocation. This chain is NADH-ubiquinone oxidoreductase chain 4L (MT-ND4L), found in Leptonychotes weddellii (Weddell seal).